The primary structure comprises 603 residues: Complement factor I (603 aa).

A signal peptide spans 1–18 (MKLAHLSLFLLALHLSSS). 20 disulfides stabilise this stretch: Cys36–Cys260, Cys46–Cys57, Cys51–Cys62, Cys64–Cys96, Cys70–Cys89, Cys78–Cys109, Cys144–Cys186, Cys157–Cys219, Cys191–Cys201, Cys234–Cys252, Cys246–Cys261, Cys264–Cys276, Cys271–Cys289, Cys283–Cys298, Cys348–Cys473, Cys386–Cys402, Cys394–Cys464, Cys487–Cys551, Cys515–Cys530, and Cys541–Cys570. Residues 58-111 (IEGTCICKLPYQCPRAGTPVCAMNGRSYPTYCHQKSFECLHPEIKFSHNGTCAA) form the Kazal-like domain. N-linked (GlcNAc...) asparagine glycans are attached at residues Asn106, Asn116, Asn174, and Asn182. The SRCR domain occupies 117–217 (VSLIYGRTKT…TELSNGLAGV (101 aa)). LDL-receptor class A domains are found at residues 218 to 262 (VCYK…LCCK) and 263 to 299 (GCRGNASLCKSGVCIPDQYKCNGEVDCITGEDESRCE). Positions 244, 247, 249, 251, 257, and 258 each coordinate Ca(2+). Asn267 carries an N-linked (GlcNAc...) asparagine glycan. Positions 281, 284, 286, 288, 294, and 295 each coordinate Ca(2+). Positions 361–594 (VIGGKPANVG…YFDWISYHVG (234 aa)) constitute a Peptidase S1 domain. Residues His401 and Asp449 each act as charge relay system in the active site. N-linked (GlcNAc...) asparagine glycosylation is present at Asn514. The active-site Charge relay system is Ser545. N-linked (GlcNAc...) asparagine glycosylation is present at Asn556.

It belongs to the peptidase S1 family. Heterodimer of a light and heavy chains; disulfide-linked. The fully processed and mature protein circulates as a zymogen, and is allosterically activated by substrate-induced remodeling of the active site. Interacts with C3b. Interacts with complement factor H. Expressed in the liver by hepatocytes. Also present in other cells such as monocytes, fibroblasts or keratinocytes.

The protein resides in the secreted. It is found in the extracellular space. It catalyses the reaction Inactivates complement subcomponents C3b, iC3b and C4b by proteolytic cleavage.. Trypsin-like serine protease that plays an essential role in regulating the immune response by controlling all complement pathways. Inhibits these pathways by cleaving three peptide bonds in the alpha-chain of C3b and two bonds in the alpha-chain of C4b thereby inactivating these proteins. Essential cofactors for these reactions include factor H and C4BP in the fluid phase and membrane cofactor protein/CD46 and CR1 on cell surfaces. The presence of these cofactors on healthy cells allows degradation of deposited C3b by CFI in order to prevent undesired complement activation, while in apoptotic cells or microbes, the absence of such cofactors leads to C3b-mediated complement activation and subsequent opsonization. The polypeptide is Complement factor I (Cfi) (Mus musculus (Mouse)).